The primary structure comprises 1245 residues: Nidogen-1 (1245 aa).

Positions 1–28 (MLDASGCSWAMWTWALLQLLLLVGPGGC) are cleaved as a signal peptide. One can recognise an NIDO domain in the interval 106–268 (PFLADLDTTD…GVWVFEIGSP (163 aa)). N-linked (GlcNAc...) asparagine glycosylation is present at Asn187. A sulfotyrosine mark is found at Tyr290 and Tyr295. O-linked (GalNAc...) threonine glycosylation occurs at Thr299. The segment at 307 to 344 (VATPSPSHSPRRGYPDPHNVPRILSPGYEATERPRGVP) is disordered. Ser331 carries an O-linked (GalNAc...) serine glycan. Thr337 and Thr345 each carry an O-linked (GalNAc...) threonine glycan. A glycan (O-linked (GalNAc...) threonine; partial) is linked at Thr348. Residues 384 to 424 (SQQTCANNRHQCSVHAECRDYATGFCCRCVANYTGNGRQCV) form the EGF-like 1 domain. Intrachain disulfides connect Cys388–Cys401, Cys395–Cys410, Cys409–Cys616, Cys412–Cys423, Cys670–Cys683, Cys677–Cys693, Cys695–Cys706, Cys712–Cys725, Cys719–Cys734, Cys736–Cys748, Cys760–Cys775, Cys767–Cys785, Cys787–Cys798, Cys804–Cys815, Cys809–Cys824, Cys826–Cys837, Cys847–Cys876, Cys887–Cys894, and Cys896–Cys917. Residue Asn415 is glycosylated (N-linked (GlcNAc...) asparagine). A Nidogen G2 beta-barrel domain is found at 428–665 (SPQRVNGKVK…GPVRDGSPDA (238 aa)). The EGF-like 2 domain maps to 666–707 (LQNPCYIGTHGCDSNAACRPGPGTQFTCECSIGFRGDGQTCY). A Cell attachment site motif is present at residues 700–702 (RGD). Residues 708-749 (DIDECSEQPSRCGNHAVCNNLPGTFRCECVEGYHFSDRGTCV) enclose the EGF-like 3; calcium-binding domain. Positions 756-799 (PINYCETGLHNCDIPQRAQCIYMGGSSYTCSCLPGFSGDGRACR) constitute an EGF-like 4 domain. In terms of domain architecture, EGF-like 5; calcium-binding spans 800–838 (DVDECQHSRCHPDAFCYNTPGSFTCQCKPGYQGDGFRCM). Positions 844–917 (KTRCQLEREH…RTPPGMRPPC (74 aa)) constitute a Thyroglobulin type-1 domain. 2 O-linked (GalNAc...) threonine glycosylation sites follow: Thr920 and Thr933. LDL-receptor class B repeat units lie at residues 988–1030 (KVVY…DHLG), 1031–1073 (RTIF…DPVR), 1074–1118 (GNLY…DAFS), and 1119–1160 (SQLC…YGKN). Positions 1206 to 1242 (GHNYCSVNNGGCTHLCLPTPGSRTCRCPDNTLGVDCI) constitute an EGF-like 6 domain. 3 disulfide bridges follow: Cys1210–Cys1221, Cys1217–Cys1230, and Cys1232–Cys1241.

Interacts with FBLN1. Interacts with LGALS3BP. Interacts with PLXDC1. Interacts with SVEP1. Post-translationally, N- and O-glycosylated.

Its subcellular location is the secreted. The protein localises to the extracellular space. It localises to the extracellular matrix. The protein resides in the basement membrane. Functionally, sulfated glycoprotein widely distributed in basement membranes and tightly associated with laminin. Also binds to collagen IV and perlecan. It probably has a role in cell-extracellular matrix interactions. In Mus musculus (Mouse), this protein is Nidogen-1 (Nid1).